The primary structure comprises 289 residues: ATP synthase gamma chain (289 aa).

Belongs to the ATPase gamma chain family. As to quaternary structure, F-type ATPases have 2 components, CF(1) - the catalytic core - and CF(0) - the membrane proton channel. CF(1) has five subunits: alpha(3), beta(3), gamma(1), delta(1), epsilon(1). CF(0) has three main subunits: a, b and c.

Its subcellular location is the cell inner membrane. Functionally, produces ATP from ADP in the presence of a proton gradient across the membrane. The gamma chain is believed to be important in regulating ATPase activity and the flow of protons through the CF(0) complex. This chain is ATP synthase gamma chain, found in Phocaeicola vulgatus (strain ATCC 8482 / DSM 1447 / JCM 5826 / CCUG 4940 / NBRC 14291 / NCTC 11154) (Bacteroides vulgatus).